The chain runs to 110 residues: ATP-dependent Clp protease adapter protein ClpS (110 aa).

Positions 1–10 are enriched in basic and acidic residues; the sequence is MSDDRRRGDE. The segment at 1–27 is disordered; sequence MSDDRRRGDEDGGAGTGVITKTKPKTK.

Belongs to the ClpS family. Binds to the N-terminal domain of the chaperone ClpA.

Its function is as follows. Involved in the modulation of the specificity of the ClpAP-mediated ATP-dependent protein degradation. This chain is ATP-dependent Clp protease adapter protein ClpS, found in Parvibaculum lavamentivorans (strain DS-1 / DSM 13023 / NCIMB 13966).